Consider the following 701-residue polypeptide: Elongation factor G (701 aa).

The 281-residue stretch at Ala-10 to Leu-290 folds into the tr-type G domain. Residues Ala-19 to Thr-26, Asp-83 to His-87, and Asn-137 to Asp-140 each bind GTP.

It belongs to the TRAFAC class translation factor GTPase superfamily. Classic translation factor GTPase family. EF-G/EF-2 subfamily.

The protein localises to the cytoplasm. Functionally, catalyzes the GTP-dependent ribosomal translocation step during translation elongation. During this step, the ribosome changes from the pre-translocational (PRE) to the post-translocational (POST) state as the newly formed A-site-bound peptidyl-tRNA and P-site-bound deacylated tRNA move to the P and E sites, respectively. Catalyzes the coordinated movement of the two tRNA molecules, the mRNA and conformational changes in the ribosome. The polypeptide is Elongation factor G (Tropheryma whipplei (strain TW08/27) (Whipple's bacillus)).